The primary structure comprises 601 residues: Glutamine--tRNA ligase (601 aa).

Positions 76–86 (PEPNGYLHIGH) match the 'HIGH' region motif. Residues 77–79 (EPN) and 83–89 (HIGHAKS) contribute to the ATP site. Positions 109 and 253 each coordinate L-glutamine. ATP-binding positions include threonine 272, 301-302 (RL), and 309-311 (MSK). The 'KMSKS' region motif lies at 308-312 (VMSKR).

This sequence belongs to the class-I aminoacyl-tRNA synthetase family. In terms of assembly, monomer.

It is found in the cytoplasm. The enzyme catalyses tRNA(Gln) + L-glutamine + ATP = L-glutaminyl-tRNA(Gln) + AMP + diphosphate. In Rhodopirellula baltica (strain DSM 10527 / NCIMB 13988 / SH1), this protein is Glutamine--tRNA ligase.